Consider the following 393-residue polypeptide: S-adenosylmethionine synthase (393 aa).

Position 16 (His16) interacts with ATP. Mg(2+) is bound at residue Asp18. Residue Glu44 coordinates K(+). The L-methionine site is built by Glu57 and Gln100. Residues 100–110 are flexible loop; that stretch reads QSQDIAQGVDK. Residues 167 to 169, 238 to 239, Asp247, 253 to 254, Ala270, and Lys274 contribute to the ATP site; these read DAK, RF, and RK. Residue Asp247 coordinates L-methionine. Residue Lys278 coordinates L-methionine.

Belongs to the AdoMet synthase family. As to quaternary structure, homotetramer; dimer of dimers. Requires Mg(2+) as cofactor. K(+) is required as a cofactor.

It is found in the cytoplasm. The catalysed reaction is L-methionine + ATP + H2O = S-adenosyl-L-methionine + phosphate + diphosphate. The protein operates within amino-acid biosynthesis; S-adenosyl-L-methionine biosynthesis; S-adenosyl-L-methionine from L-methionine: step 1/1. In terms of biological role, catalyzes the formation of S-adenosylmethionine (AdoMet) from methionine and ATP. The overall synthetic reaction is composed of two sequential steps, AdoMet formation and the subsequent tripolyphosphate hydrolysis which occurs prior to release of AdoMet from the enzyme. The polypeptide is S-adenosylmethionine synthase (Delftia acidovorans (strain DSM 14801 / SPH-1)).